Consider the following 417-residue polypeptide: Lactose permease (417 aa).

Methionine 1 bears the N-formylmethionine; partial mark. Topologically, residues 1 to 7 (MYYLKNT) are cytoplasmic. The chain crosses the membrane as a helical span at residues 8 to 34 (NFWMFGLFFFFYFFIMGAYFPFFPIWL). At 35-41 (HDINHIS) the chain is on the periplasmic side. The helical transmembrane segment at 42 to 70 (KSDTGIIFAAISLFSLLFQPLFGLLSDKL) threads the bilayer. The Cytoplasmic portion of the chain corresponds to 71–74 (GLRK). The chain crosses the membrane as a helical span at residues 75–100 (YLLWIITGMLVMFAPFFIFIFGPLLQ). Topologically, residues 101–104 (YNIL) are periplasmic. Residues 105–129 (VGSIVGGIYLGFCFNAGAPAVEAFI) traverse the membrane as a helical segment. Topologically, residues 130 to 140 (EKVSRRSNFEF) are cytoplasmic. The helical transmembrane segment at 141–163 (GRARMFGCVGWALCASIVGIMFT) threads the bilayer. The Periplasmic portion of the chain corresponds to 164-166 (INN). Residues 167-186 (QFVFWLGSGCALILAVLLFF) form a helical membrane-spanning segment. At 187–220 (AKTDAPSSATVANAVGANHSAFSLKLALELFRQP) the chain is on the cytoplasmic side. Residues 221–249 (KLWFLSLYVIGVSCTYDVFDQQFANFFTS) traverse the membrane as a helical segment. Residues 250–253 (FFAT) lie on the Periplasmic side of the membrane. Residues 254–278 (GEQGTRVFGYVTTMGELLNASIMFF) form a helical membrane-spanning segment. Residues 279 to 288 (APLIINRIGG) are Cytoplasmic-facing. A helical membrane pass occupies residues 289-308 (KNALLLAGTIMSVRIIGSSF). Topologically, residues 309–311 (ATS) are periplasmic. The helical transmembrane segment at 312-334 (ALEVVILKTLHMFEVPFLLVGCF) threads the bilayer. The Cytoplasmic portion of the chain corresponds to 335–346 (KYITSQFEVRFS). The helical transmembrane segment at 347–374 (ATIYLVCFCFFKQLAMIFMSVLAGNMYE) threads the bilayer. Topologically, residues 375–377 (SIG) are periplasmic. A helical transmembrane segment spans residues 378–398 (FQGAYLVLGLVALGFTLISVF). Over 399-417 (TLSGPGPLSLLRRQVNEVA) the chain is Cytoplasmic.

Monomer.

The protein localises to the cell inner membrane. The catalysed reaction is lactose(in) + H(+)(in) = lactose(out) + H(+)(out). It catalyses the reaction melibiose(in) + H(+)(in) = melibiose(out) + H(+)(out). Its activity is regulated as follows. Inhibited by the proton ionophore carbonyl cyanide m-chlorophenylhydrazone (CCCP). Responsible for transport of beta-galactosides into the cell, with the concomitant import of a proton (symport system). Can transport lactose, melibiose, the synthetic disaccharide lactulose or the analog methyl-1-thio-beta,D-galactopyranoside (TMG), but not sucrose or fructose. The substrate specificity is directed toward the galactopyranosyl moiety of the substrate. This Escherichia coli (strain K12) protein is Lactose permease.